Reading from the N-terminus, the 337-residue chain is Pseudouridine-5'-phosphate glycosidase (337 aa).

The active-site Proton donor is Glu-26. Substrate-binding residues include Lys-87 and Val-107. Asp-139 is a binding site for Mn(2+). 141-143 (SAD) is a binding site for substrate. Residue Lys-160 is the Nucleophile of the active site. Low complexity predominate over residues 306–325 (SSGPQAGAGAPGAEPGPARR). A disordered region spans residues 306–337 (SSGPQAGAGAPGAEPGPARRTSPARAPSGEGW).

It belongs to the pseudouridine-5'-phosphate glycosidase family. As to quaternary structure, homotrimer. The cofactor is Mn(2+).

It catalyses the reaction D-ribose 5-phosphate + uracil = psi-UMP + H2O. Its function is as follows. Catalyzes the reversible cleavage of pseudouridine 5'-phosphate (PsiMP) to ribose 5-phosphate and uracil. Functions biologically in the cleavage direction, as part of a pseudouridine degradation pathway. The polypeptide is Pseudouridine-5'-phosphate glycosidase (Methylobacterium nodulans (strain LMG 21967 / CNCM I-2342 / ORS 2060)).